We begin with the raw amino-acid sequence, 26 residues long: Fumarylacetoacetate hydrolase domain-containing protein 2A (26 aa).

It belongs to the FAH family. Ca(2+) serves as cofactor. It depends on Mg(2+) as a cofactor.

Its function is as follows. May have hydrolase activity. This Mesocricetus auratus (Golden hamster) protein is Fumarylacetoacetate hydrolase domain-containing protein 2A.